A 172-amino-acid chain; its full sequence is uncharacterized protein (172 aa).

In terms of domain architecture, PfpI endopeptidase spans 3-171 (KKVAIILSNE…FNREIVKQLQ (169 aa)).

This sequence belongs to the peptidase C56 family.

This is an uncharacterized protein from Staphylococcus haemolyticus (strain JCSC1435).